The sequence spans 192 residues: Adapter protein MecA (192 aa).

This sequence belongs to the MecA family. As to quaternary structure, homodimer.

In terms of biological role, enables the recognition and targeting of unfolded and aggregated proteins to the ClpC protease or to other proteins involved in proteolysis. Acts negatively in the development of competence by binding ComK and recruiting it to the ClpCP protease. When overexpressed, inhibits sporulation. Also involved in Spx degradation by ClpC. This is Adapter protein MecA from Oceanobacillus iheyensis (strain DSM 14371 / CIP 107618 / JCM 11309 / KCTC 3954 / HTE831).